The primary structure comprises 259 residues: GTP cyclohydrolase FolE2 (259 aa).

This sequence belongs to the GTP cyclohydrolase IV family.

The enzyme catalyses GTP + H2O = 7,8-dihydroneopterin 3'-triphosphate + formate + H(+). It functions in the pathway cofactor biosynthesis; 7,8-dihydroneopterin triphosphate biosynthesis; 7,8-dihydroneopterin triphosphate from GTP: step 1/1. Converts GTP to 7,8-dihydroneopterin triphosphate. This chain is GTP cyclohydrolase FolE2, found in Thermotoga petrophila (strain ATCC BAA-488 / DSM 13995 / JCM 10881 / RKU-1).